The chain runs to 224 residues: Response regulator protein GraR (224 aa).

Residues 2–115 form the Response regulatory domain; sequence QILLVEDDNT…VLIAKLQAIY (114 aa). Position 51 is a 4-aspartylphosphate (D51). Positions 126-224 form a DNA-binding region, ompR/PhoB-type; sequence KRTLTWQDAV…KVGKGYMAHE (99 aa). Phosphothreonine occurs at positions 128, 130, and 149.

Interacts with GraX. Phosphorylated by GraS. Phosphorylated by Stk1; phosphorylation increases the DNA-binding activity of GraR.

The protein resides in the cytoplasm. Member of the two-component regulatory system GraR/GraS involved in resistance against cationic antimicrobial peptides (CAMPs). Upon phosphorylation by GraS, functions as a transcription regulator by direct binding to promoter regions of target genes such as adhesins, exoproteins, transporters, toxins, and proteins involved in cell wall synthesis. Down-regulates the expression of many genes involved in RNA and amino acid synthesis or glycolysis. This chain is Response regulator protein GraR (graR), found in Staphylococcus aureus (strain Mu3 / ATCC 700698).